The sequence spans 212 residues: Large ribosomal subunit protein mL48 (212 aa).

Residues 1–28 (MSGTLEKVLCLRNNTIFKQAFSLLRFRT) constitute a mitochondrion transit peptide. Residue K199 is modified to N6-succinyllysine.

It belongs to the mitochondrion-specific ribosomal protein mL48 family. As to quaternary structure, component of the mitochondrial large ribosomal subunit (mt-LSU). Mature mammalian 55S mitochondrial ribosomes consist of a small (28S) and a large (39S) subunit. The 28S small subunit contains a 12S ribosomal RNA (12S mt-rRNA) and 30 different proteins. The 39S large subunit contains a 16S rRNA (16S mt-rRNA), a copy of mitochondrial valine transfer RNA (mt-tRNA(Val)), which plays an integral structural role, and 52 different proteins. mL48 is located at the central protuberance. Interacts with OXA1L.

It localises to the mitochondrion. The polypeptide is Large ribosomal subunit protein mL48 (MRPL48) (Homo sapiens (Human)).